The following is a 167-amino-acid chain: MAKEQQVQANDLQEKLIAVNRVSKTVKGGRIMSFTALTVVGDGNGRVGFGYGKAREVPAAIQKAMEKARRNMVTIALNEGTLHHPVKGRHSGSKVYMQPAAEGTGVIAGGAMRAVLEVAGVHNVLSKAYGSTNPINIVRATIDALVDVKSPEMVAAKRGLTVEAISE.

An S5 DRBM domain is found at 12-75 (LQEKLIAVNR…EKARRNMVTI (64 aa)).

It belongs to the universal ribosomal protein uS5 family. As to quaternary structure, part of the 30S ribosomal subunit. Contacts proteins S4 and S8.

Functionally, with S4 and S12 plays an important role in translational accuracy. Located at the back of the 30S subunit body where it stabilizes the conformation of the head with respect to the body. The polypeptide is Small ribosomal subunit protein uS5 (Vibrio vulnificus (strain CMCP6)).